The following is a 250-amino-acid chain: Testis-expressed protein 101 (250 aa).

The N-terminal stretch at 1-25 (MGACRIQYVLLIFLLIASRWTLVQN) is a signal peptide. N-linked (GlcNAc...) asparagine glycosylation is found at N45, N110, N134, and N160. Residues 141–215 (CPTCVALGSC…VKETCSYQSF (75 aa)) enclose the UPAR/Ly6 domain. Residue G224 is the site of GPI-anchor amidated glycine attachment. A propeptide spans 225–250 (ASQMPTSLWVLELLFPLLLLPLTHFP) (removed in mature form).

As to quaternary structure, interacts with VAMP3. Interacts with LY6K. Interacts with DPEP3; co-localized on the cell surface of spermatocytes, spermatids, and testicular spermatozoa, co-localized only in cytoplasmic droplets of caput and corpus epididymal sperm. Interacts with ADAM3; co-localized on sperm surface. Interacts with ADAM5. Post-translationally, N-glycosylated; by high mannose and/or biantennary complex and/or certain types of hybrid oligosaccharides; possesses different oligosaccharides chains according to its subcellular localization in the testis. In terms of processing, sheds from membrane raft by ACE and released from the cell surface of epididymal sperm while it passes through the caput epididymis leading to disappearance of TEX101 on spermatozoa; is essential to produce fertile spermatozoa. As to expression, detected in testis and ovary. Expressed in spermatocytes, spermatids and testicular spermatozoa, but not in spermatogonia or interstitial cells. Expressed abundantly in testicular germ cells (TGCs) but mostly disappeared from epididymal spermatozoa.

It localises to the cell membrane. It is found in the membrane raft. Its subcellular location is the cytoplasmic vesicle. The protein localises to the secretory vesicle. The protein resides in the acrosome. It localises to the secreted. Plays a role in fertilization by controlling binding of sperm to zona pellucida and migration of spermatozoa into the oviduct probably through molecule adhesion ADAM3. May play a role in signal transduction and promote protein tyrosine phosphorylation. In Mus musculus (Mouse), this protein is Testis-expressed protein 101.